We begin with the raw amino-acid sequence, 226 residues long: Sugar fermentation stimulation protein homolog (226 aa).

This sequence belongs to the SfsA family.

The chain is Sugar fermentation stimulation protein homolog from Clostridium beijerinckii (strain ATCC 51743 / NCIMB 8052) (Clostridium acetobutylicum).